A 490-amino-acid polypeptide reads, in one-letter code: MTQQTHFIAGQWHAGQGHDIESIDPAKKRQIWQAKSASSEQVNQAVSSARKATVTWAACTFEQRLAYVKRFGELLAENKDMLALTIAQETGKPLWETATEVGAMMGKIGISERAYQERTGLVENPMPVGKAFIRHKPHGVVAVFGPYNFPGHLPNGHIVPALLAGNCIVFKPSDLTPLVAERTVQLWEKAGLPKGVLNLVQGEVETGKALAAHPDLDGLFFTGSSRTGKILHEQYAGHPGKILALEMGGNNPLIVKDISDIDATVHDIIQSAFVTSGQRCTCARKLFLENNTQGDAILARLIEVTKNIKVGDYDADEQPFMGAMISKNAAHAMVMAQQQLLDLGATSLVELTHLDPESGFVSPGIIDVTAMVEQMPDDEHFGPLLKVVRFDDFDRAISLGNNTKFGLSAGLLSDSEDLYQHFYQRIRAGIVNWNRPITGASGAAPFGGVGESGNHRASAYYAADYCAYPVASVELEKVTLPGNLNPGLNF.

Residue 223–228 (GSSRTG) coordinates NAD(+). Active-site residues include E246 and C280.

Belongs to the aldehyde dehydrogenase family. AstD subfamily.

It catalyses the reaction N-succinyl-L-glutamate 5-semialdehyde + NAD(+) + H2O = N-succinyl-L-glutamate + NADH + 2 H(+). The protein operates within amino-acid degradation; L-arginine degradation via AST pathway; L-glutamate and succinate from L-arginine: step 4/5. In terms of biological role, catalyzes the NAD-dependent reduction of succinylglutamate semialdehyde into succinylglutamate. This chain is N-succinylglutamate 5-semialdehyde dehydrogenase, found in Pseudoalteromonas atlantica (strain T6c / ATCC BAA-1087).